The primary structure comprises 889 residues: Oxysterol-binding protein-related protein 8 (889 aa).

Residue methionine 1 is modified to N-acetylmethionine. The segment at 1-129 (MEGGLADGEP…SLKVQKKNYR (129 aa)) is disordered. Serine 14 is subject to Phosphoserine. 2 stretches are compositionally biased toward polar residues: residues 28 to 46 (VVANSDESQLLTPGKMSQR) and 62 to 71 (PSLSPASPHS). Phosphoserine occurs at positions 65 and 68. Basic and acidic residues-rich tracts occupy residues 73 to 88 (GFERGKEDISQNKDES), 95 to 109 (SKSESKLYNGSEKDS), and 116 to 129 (TKKESLKVQKKNYR). Positions 148 to 265 (VIVMADWLKI…WMDALELALK (118 aa)) constitute a PH domain. 3 positions are modified to phosphoserine: serine 314, serine 328, and serine 342. Over residues 322–336 (KDQDMYSDKSDKEND) the composition is skewed to basic and acidic residues. The interval 322 to 399 (KDQDMYSDKS…AGEASQTETV (78 aa)) is disordered. The span at 346-363 (VMGKSEESDTDTSERQDD) shows a compositional bias: basic and acidic residues. A 1,2-diacyl-sn-glycero-3-phospho-(1D-myo-inositol 4-phosphate) contacts are provided by residues 420–425 (LSKVVL), 482–485 (KPYN), and 514–515 (HH). A 1,2-diacyl-sn-glycero-3-phospho-L-serine-binding positions include 420–425 (LSKVVL) and asparagine 485. Serine 540 contributes to the a 1,2-diacyl-sn-glycero-3-phospho-L-serine binding site. A 1,2-diacyl-sn-glycero-3-phospho-(1D-myo-inositol 4-phosphate)-binding residues include lysine 706, glutamate 710, and arginine 714. A disordered region spans residues 771–823 (KHRTPMVSVPKMKHKPTRQQKKVAKGYSSPEPDIQDSSGSEAQSVKPSTRRKK). A compositionally biased stretch (basic residues) spans 781–794 (KMKHKPTRQQKKVA). Polar residues predominate over residues 805–817 (QDSSGSEAQSVKP). A phosphoserine mark is found at serine 807, serine 808, serine 810, and serine 814. Residues 871 to 888 (YFIIFLLILLQVIINFMF) traverse the membrane as a helical segment.

Belongs to the OSBP family. In terms of assembly, interacts with SPAG5. Interacts with NUP62. In terms of tissue distribution, widely expressed. Expressed at higher level in macrophages.

The protein localises to the endoplasmic reticulum membrane. It is found in the nucleus membrane. In terms of biological role, lipid transporter involved in lipid countertransport between the endoplasmic reticulum and the plasma membrane: specifically exchanges phosphatidylserine with phosphatidylinositol 4-phosphate (PI4P), delivering phosphatidylserine to the plasma membrane in exchange for PI4P, which is degraded by the SAC1/SACM1L phosphatase in the endoplasmic reticulum. Binds phosphatidylserine and PI4P in a mutually exclusive manner. Binds oxysterol, 25-hydroxycholesterol and cholesterol. In Homo sapiens (Human), this protein is Oxysterol-binding protein-related protein 8 (OSBPL8).